The sequence spans 428 residues: uncharacterized protein (428 aa).

Disordered regions lie at residues 1-25 (MRDNSAKGITAGSESQQTTYDPTRT), 157-219 (DTAK…TEQV), and 247-271 (DFGTTPSSSGSGGNSNPGSPTPWRP). The segment covering 12-22 (GSESQQTTYDP) has biased composition (polar residues). The segment covering 157 to 171 (DTAKSNEKLQGDESK) has biased composition (basic and acidic residues). Over residues 172 to 186 (SSNGSSSTSTTTQRG) the composition is skewed to low complexity. Positions 206–217 (GSQGNSGEQGTE) are enriched in polar residues.

The protein belongs to the adhesin P1 family.

This is an uncharacterized protein from Mycoplasma pneumoniae (strain ATCC 29342 / M129 / Subtype 1) (Mycoplasmoides pneumoniae).